Here is a 250-residue protein sequence, read N- to C-terminus: 2,3-bisphosphoglycerate-dependent phosphoglycerate mutase (250 aa).

Residues 10–17 (RHGESQWN), 23–24 (TG), Arg62, 89–92 (ERHY), Lys100, 116–117 (RR), and 185–186 (GN) contribute to the substrate site. The active-site Tele-phosphohistidine intermediate is His11. Catalysis depends on Glu89, which acts as the Proton donor/acceptor.

The protein belongs to the phosphoglycerate mutase family. BPG-dependent PGAM subfamily. As to quaternary structure, homodimer.

The catalysed reaction is (2R)-2-phosphoglycerate = (2R)-3-phosphoglycerate. It functions in the pathway carbohydrate degradation; glycolysis; pyruvate from D-glyceraldehyde 3-phosphate: step 3/5. Its function is as follows. Catalyzes the interconversion of 2-phosphoglycerate and 3-phosphoglycerate. The chain is 2,3-bisphosphoglycerate-dependent phosphoglycerate mutase from Salmonella agona (strain SL483).